The chain runs to 142 residues: Transcription antitermination protein NusB (142 aa).

It belongs to the NusB family.

Involved in transcription antitermination. Required for transcription of ribosomal RNA (rRNA) genes. Binds specifically to the boxA antiterminator sequence of the ribosomal RNA (rrn) operons. This chain is Transcription antitermination protein NusB, found in Thermotoga sp. (strain RQ2).